The following is a 369-amino-acid chain: Adenosine 3'-phospho 5'-phosphosulfate transporter 2 (369 aa).

N-linked (GlcNAc...) asparagine glycosylation occurs at N39. 6 consecutive transmembrane segments (helical) span residues 46-66 (LTQF…YGYL), 79-99 (YGWY…LIEL), 115-135 (MLIA…LGYL), 138-158 (PTQV…GVFI), 168-188 (VSAA…DSTI), and 191-211 (NFNL…AVIG). N-linked (GlcNAc...) asparagine glycosylation is present at N222. The next 4 membrane-spanning stretches (helical) occupy residues 235–255 (IGFV…PAVA), 266–285 (GYAF…VLAL), 292–314 (LLAV…LFFA), and 317–337 (FTFQ…LNVY).

The protein belongs to the nucleotide-sugar transporter family. SLC35B subfamily.

It localises to the golgi apparatus membrane. The enzyme catalyses 3'-phosphoadenylyl sulfate(in) + adenosine 3',5'-bisphosphate(out) = 3'-phosphoadenylyl sulfate(out) + adenosine 3',5'-bisphosphate(in). Its function is as follows. Probably functions as a 3'-phosphoadenylyl sulfate:adenosine 3',5'-bisphosphate antiporter at the Golgi membranes. Mediates the transport from the cytosol into the lumen of the Golgi of 3'-phosphoadenylyl sulfate/adenosine 3'-phospho 5'-phosphosulfate (PAPS), a universal sulfuryl donor for sulfation events that take place in that compartment. The sequence is that of Adenosine 3'-phospho 5'-phosphosulfate transporter 2 from Mus musculus (Mouse).